A 387-amino-acid chain; its full sequence is 1-deoxy-D-xylulose 5-phosphate reductoisomerase (387 aa).

NADPH is bound by residues T10, G11, S12, V13, N38, and N119. K120 is a 1-deoxy-D-xylulose 5-phosphate binding site. Residue E121 coordinates NADPH. Residue D145 coordinates Mn(2+). S146, E147, S170, and H193 together coordinate 1-deoxy-D-xylulose 5-phosphate. E147 contacts Mn(2+). G199 contributes to the NADPH binding site. 1-deoxy-D-xylulose 5-phosphate-binding residues include S206, N211, K212, and E215. Residue E215 participates in Mn(2+) binding.

It belongs to the DXR family. Requires Mg(2+) as cofactor. Mn(2+) is required as a cofactor.

The catalysed reaction is 2-C-methyl-D-erythritol 4-phosphate + NADP(+) = 1-deoxy-D-xylulose 5-phosphate + NADPH + H(+). It participates in isoprenoid biosynthesis; isopentenyl diphosphate biosynthesis via DXP pathway; isopentenyl diphosphate from 1-deoxy-D-xylulose 5-phosphate: step 1/6. Catalyzes the NADPH-dependent rearrangement and reduction of 1-deoxy-D-xylulose-5-phosphate (DXP) to 2-C-methyl-D-erythritol 4-phosphate (MEP). This is 1-deoxy-D-xylulose 5-phosphate reductoisomerase from Wolbachia pipientis wMel.